The chain runs to 105 residues: Large ribosomal subunit protein uL24 (105 aa).

It belongs to the universal ribosomal protein uL24 family. Part of the 50S ribosomal subunit.

Its function is as follows. One of two assembly initiator proteins, it binds directly to the 5'-end of the 23S rRNA, where it nucleates assembly of the 50S subunit. One of the proteins that surrounds the polypeptide exit tunnel on the outside of the subunit. This chain is Large ribosomal subunit protein uL24, found in Azoarcus sp. (strain BH72).